The chain runs to 351 residues: MGITVRNLHKRFGEFAALDDVSLDFPAGELVALLGPSGCGKTTLLRVIAGLEHADSGQVVLQGLDVASVGARERQVGFVFQHYALFRHMTVFENVAFGLRVKPRRERPSEAAIRAKVHELLSLVQLDWLAQRYPSELSGGQRQRIALARALAVEPKVLLLDEPFGALDAKVRKELRGWLRRLHDDLHISTIFVTHDQEEALEVADRIVVLNHGRVEQVGSPQAVYDHPRSAFVYEFLGAANRLDGTVSGNGFVAHGAAQAIAVDADFAGPARAYVRPHDLELAAPYARAQGIAADVRRVVRLGGSVRVELAARSGEVLEAELDRNAWRALALDVGDALTAVPRAVRVFPAR.

Residues 3 to 237 enclose the ABC transporter domain; the sequence is ITVRNLHKRF…PRSAFVYEFL (235 aa). ATP is bound at residue 35–42; the sequence is GPSGCGKT.

Belongs to the ABC transporter superfamily. Sulfate/tungstate importer (TC 3.A.1.6) family. As to quaternary structure, the complex is composed of two ATP-binding proteins (CysA), two transmembrane proteins (CysT and CysW) and a solute-binding protein (CysP).

The protein localises to the cell inner membrane. The catalysed reaction is sulfate(out) + ATP + H2O = sulfate(in) + ADP + phosphate + H(+). The enzyme catalyses thiosulfate(out) + ATP + H2O = thiosulfate(in) + ADP + phosphate + H(+). Functionally, part of the ABC transporter complex CysAWTP involved in sulfate/thiosulfate import. Responsible for energy coupling to the transport system. The chain is Sulfate/thiosulfate import ATP-binding protein CysA from Burkholderia pseudomallei (strain K96243).